A 203-amino-acid chain; its full sequence is dITP/XTP pyrophosphatase (203 aa).

Ser-15 to Lys-20 contacts substrate. Mg(2+)-binding residues include Glu-45 and Asp-74. Asp-74 serves as the catalytic Proton acceptor. Residues Ser-75, Phe-153–Asp-156, Lys-176, and His-181–Arg-182 each bind substrate.

This sequence belongs to the HAM1 NTPase family. As to quaternary structure, homodimer. It depends on Mg(2+) as a cofactor.

It catalyses the reaction XTP + H2O = XMP + diphosphate + H(+). It carries out the reaction dITP + H2O = dIMP + diphosphate + H(+). The catalysed reaction is ITP + H2O = IMP + diphosphate + H(+). In terms of biological role, pyrophosphatase that catalyzes the hydrolysis of nucleoside triphosphates to their monophosphate derivatives, with a high preference for the non-canonical purine nucleotides XTP (xanthosine triphosphate), dITP (deoxyinosine triphosphate) and ITP. Seems to function as a house-cleaning enzyme that removes non-canonical purine nucleotides from the nucleotide pool, thus preventing their incorporation into DNA/RNA and avoiding chromosomal lesions. The polypeptide is dITP/XTP pyrophosphatase (Prochlorococcus marinus (strain MIT 9313)).